A 139-amino-acid chain; its full sequence is S-adenosylmethionine decarboxylase proenzyme (139 aa).

S63 (schiff-base intermediate with substrate; via pyruvic acid) is an active-site residue. S63 is subject to Pyruvic acid (Ser); by autocatalysis. The active-site Proton acceptor; for processing activity is the H68. The Proton donor; for catalytic activity role is filled by C83.

This sequence belongs to the prokaryotic AdoMetDC family. Type 1 subfamily. As to quaternary structure, heterotetramer of two alpha and two beta chains arranged as a dimer of alpha/beta heterodimers. Pyruvate is required as a cofactor. Is synthesized initially as an inactive proenzyme. Formation of the active enzyme involves a self-maturation process in which the active site pyruvoyl group is generated from an internal serine residue via an autocatalytic post-translational modification. Two non-identical subunits are generated from the proenzyme in this reaction, and the pyruvate is formed at the N-terminus of the alpha chain, which is derived from the carboxyl end of the proenzyme. The post-translation cleavage follows an unusual pathway, termed non-hydrolytic serinolysis, in which the side chain hydroxyl group of the serine supplies its oxygen atom to form the C-terminus of the beta chain, while the remainder of the serine residue undergoes an oxidative deamination to produce ammonia and the pyruvoyl group blocking the N-terminus of the alpha chain.

It carries out the reaction S-adenosyl-L-methionine + H(+) = S-adenosyl 3-(methylsulfanyl)propylamine + CO2. Its pathway is amine and polyamine biosynthesis; S-adenosylmethioninamine biosynthesis; S-adenosylmethioninamine from S-adenosyl-L-methionine: step 1/1. Functionally, catalyzes the decarboxylation of S-adenosylmethionine to S-adenosylmethioninamine (dcAdoMet), the propylamine donor required for the synthesis of the polyamines spermine and spermidine from the diamine putrescine. This is S-adenosylmethionine decarboxylase proenzyme from Pyrococcus abyssi (strain GE5 / Orsay).